The following is a 698-amino-acid chain: MVDKNRTLHELSSKNFSRTPNGLIFTNDLKTVYSIFLICLDLKEKKHSSDTKSFLLTAFTKHFHFTFTYQEAIKAMGQLELKVDMNTTCINVSYNIKPSLARHLLTLFMSSKLLHTPQDRTRGEPKEKVLFQPTPKGVAVLQKYVRDIGLKTMPDILLSSFNSMKLFTFERSSVTDSIIHSDYLIHILFIKMMGAKPNVWSPTNADDPLPCLSSLLEYTNNDDTFTFEKSKPEQGWQAQIGNIDINDLERVSPLAHRFFTNPDSESHTQYYVSNAGIRLFENKTFGTSKKIVIKYTFTTKAIWQWIMDCTDIMHVKEAVSLAALFLKTGLIVPVLLQPSRTDKKKFQISRSSFFTLSKRGWDLVSWTGCKSNNIRAPNGSTIDLDFTLRGHMTVRDEKKTLDDSEGFSQDMLISSSNLNKLDYVLTDPGMRYLFRRHLEKELCVENLDVFIEIKRFLKKMTILKKLIDSKHCDKKSNTSTSKNNIVKTIDSALMKQANECLEMAYHIYSSYIMIGSPYQLNIHHNLRQNISDIMLHPHSPLSEHFPTNLYDPSPASAESAASSISSTEADTLGEPPEVSLKPSKNLSNENCSFKKQGFKHQLKEYKPAPLTLAETHSPNASVENSHTIVRYGMDNTQNDTKSVESFPATLKVLRKLYPLFEIVSNEMYRLMNNDSFQKFTQSDVYKDASALIEIQEKC.

Residues 10-203 form a fungal-DR region; it reads ELSSKNFSRT…GAKPNVWSPT (194 aa). At Ser-252 the chain carries Phosphoserine. Residues 273 to 358 form the DEP domain; it reads SNAGIRLFEN…SRSSFFTLSK (86 aa). Ser-408 bears the Phosphoserine mark. Residues 420–689 enclose the RGS domain; the sequence is KLDYVLTDPG…TQSDVYKDAS (270 aa). A Phosphoserine; by MAPK modification is found at Ser-539. Positions 545 to 586 are disordered; that stretch reads FPTNLYDPSPASAESAASSISSTEADTLGEPPEVSLKPSKNL. The segment covering 551–570 has biased composition (low complexity); it reads DPSPASAESAASSISSTEAD. The residue at position 587 (Ser-587) is a Phosphoserine.

Post-translationally, phosphorylated by FUS3 and KSS1.

Desensitization to alpha-factor pheromone. Is involved in regulating the signaling pathway for responding to mating pheromone. The sequence is that of Protein SST2 (SST2) from Saccharomyces cerevisiae (strain ATCC 204508 / S288c) (Baker's yeast).